The following is a 293-amino-acid chain: Ribosomal protein L11 methyltransferase (293 aa).

Positions 145, 166, 188, and 230 each coordinate S-adenosyl-L-methionine.

This sequence belongs to the methyltransferase superfamily. PrmA family.

It localises to the cytoplasm. The catalysed reaction is L-lysyl-[protein] + 3 S-adenosyl-L-methionine = N(6),N(6),N(6)-trimethyl-L-lysyl-[protein] + 3 S-adenosyl-L-homocysteine + 3 H(+). Functionally, methylates ribosomal protein L11. This Salmonella dublin (strain CT_02021853) protein is Ribosomal protein L11 methyltransferase.